Here is a 363-residue protein sequence, read N- to C-terminus: Aminomethyltransferase (363 aa).

This sequence belongs to the GcvT family. As to quaternary structure, the glycine cleavage system is composed of four proteins: P, T, L and H.

The enzyme catalyses N(6)-[(R)-S(8)-aminomethyldihydrolipoyl]-L-lysyl-[protein] + (6S)-5,6,7,8-tetrahydrofolate = N(6)-[(R)-dihydrolipoyl]-L-lysyl-[protein] + (6R)-5,10-methylene-5,6,7,8-tetrahydrofolate + NH4(+). In terms of biological role, the glycine cleavage system catalyzes the degradation of glycine. In Nitrosomonas europaea (strain ATCC 19718 / CIP 103999 / KCTC 2705 / NBRC 14298), this protein is Aminomethyltransferase.